The sequence spans 551 residues: C6 finger transcription factor imqK (551 aa).

The zn(2)-C6 fungal-type DNA-binding region spans 11 to 53; sequence CDRCRGQKLRCVRLPGPAREDSPRSARSVNQPCERCKRAKVVC. Disordered regions lie at residues 280–302 and 351–378; these read RQGMSAASDPNYPASGLGETSPS and NEYSSSRSQSRNHSTSASSRSKDGRISA. Residues 351 to 369 are compositionally biased toward low complexity; it reads NEYSSSRSQSRNHSTSASS.

The protein localises to the nucleus. Its function is as follows. C6 finger transcription factor that positively regulates the cluster that mediates the biosynthesis of imizoquins A to D, tripeptide-derived alkaloids that serve a protective role against oxidative stress that are essential for normal germination. This Aspergillus flavus (strain ATCC 200026 / FGSC A1120 / IAM 13836 / NRRL 3357 / JCM 12722 / SRRC 167) protein is C6 finger transcription factor imqK.